A 530-amino-acid polypeptide reads, in one-letter code: UDP-glucuronosyltransferase 2B17 (530 aa).

A signal peptide spans 1 to 23; it reads MPGKWISALLLLQISCCFRSVKC. Asparagine 316 and asparagine 483 each carry an N-linked (GlcNAc...) asparagine glycan. A helical membrane pass occupies residues 494–510; it reads VIGFLLSCVATTIVLSV.

Belongs to the UDP-glycosyltransferase family.

Its subcellular location is the endoplasmic reticulum membrane. It catalyses the reaction glucuronate acceptor + UDP-alpha-D-glucuronate = acceptor beta-D-glucuronoside + UDP + H(+). The enzyme catalyses 17alpha-estradiol + UDP-alpha-D-glucuronate = 17alpha-estradiol 3-O-(beta-D-glucuronate) + UDP + H(+). The catalysed reaction is 17alpha-estradiol + UDP-alpha-D-glucuronate = 17alpha-estradiol 17-O-(beta-D-glucuronate) + UDP + H(+). It carries out the reaction 17beta-estradiol + UDP-alpha-D-glucuronate = 17beta-estradiol 17-O-(beta-D-glucuronate) + UDP + H(+). It catalyses the reaction 17beta-hydroxy-5alpha-androstan-3-one + UDP-alpha-D-glucuronate = 5alpha-dihydrotestosterone 17-O-(beta-D-glucuronate) + UDP + H(+). The enzyme catalyses testosterone + UDP-alpha-D-glucuronate = testosterone 17-O-(beta-D-glucuronate) + UDP + H(+). In terms of biological role, UDP-glucuronosyltransferase (UGT) that catalyzes phase II biotransformation reactions in which lipophilic substrates are conjugated with glucuronic acid to increase the metabolite's water solubility, thereby facilitating excretion into either the urine or bile. Catalyzes the glucuronidation of endogenous steroid hormones such as androgens (epitestosterone, androsterone) and estrogens (estradiol, epiestradiol). The chain is UDP-glucuronosyltransferase 2B17 from Mus musculus (Mouse).